Consider the following 153-residue polypeptide: MVKAVAVRGDSKISGTVTFEQADANAPTTVSWNITGHDANAERAFHVHQFGDNTNGCTSAGPHFNPFGKEHGAPEDENRHVGDLGNFKTDAEGNAVGSKQDKLIKLIGAESVLGRTLVIHAGTDDLGRSEHPESKKTGNAGARPACGVIGIAA.

Residues His-46, His-48, and His-63 each coordinate Cu cation. Cys-57 and Cys-146 are oxidised to a cystine. Residues 61–80 are disordered; that stretch reads GPHFNPFGKEHGAPEDENRH. Zn(2+) is bound by residues His-63, His-71, His-80, and Asp-83. Over residues 68–80 the composition is skewed to basic and acidic residues; it reads GKEHGAPEDENRH. His-120 is a Cu cation binding site. A compositionally biased stretch (basic and acidic residues) spans 124 to 136; the sequence is DDLGRSEHPESKK. Residues 124-143 form a disordered region; sequence DDLGRSEHPESKKTGNAGAR. Arg-143 lines the substrate pocket.

This sequence belongs to the Cu-Zn superoxide dismutase family. As to quaternary structure, homodimer. Requires Cu cation as cofactor. The cofactor is Zn(2+).

Its subcellular location is the cytoplasm. It catalyses the reaction 2 superoxide + 2 H(+) = H2O2 + O2. In terms of biological role, destroys radicals which are normally produced within the cells and which are toxic to biological systems. This is Superoxide dismutase [Cu-Zn] (sodC) from Aspergillus flavus.